The sequence spans 810 residues: MDNQATQRLNDLSLEPAPSHDEQDGSGLVIDIDQRKIGDEQAGVVVDDETPPLEQQDSHESLAADSRNANFSYHENQQLLENGTKQLALDEHDSHSAILEQPSHSTNCSSSNIAAMNKGHDSADHASQNSGGKPRTLSASAQHILPETLKSFAGAPVVNKQVRTSASYKMGMLADDASQQFLDDPSSELIDLYSKVAECRNLRAKYQTISVQNDDQNPKNKPGWVVYPPPPKPSYNSDTKTVVPVTNKPDAEVFDFTKCEIPGEDPDWEFTLNDDDSYVVHRSGKTDELIAQIPTLRDYYLDLEKMISISSDGPAKSFAYRRLQYLEARWNLYYLLNEYQETSVSKRNPHRDFYNVRKVDTHVHHSACMNQKHLLRFIKHKLRHSKDEKVIFRDGKLLTLDEVFRSLHLTGYDLSIDTLDMHAHKDTFHRFDKFNLKYNPIGESRLREIFLKTNNYIKGTYLADITKQVIFDLENSKYQNCEYRISVYGRSLDEWDKLASWVIDNKVISHNVRWLVQIPRLYDIYKKTGIVQSFQDICKNLFQPLFEVTKNPQSHPKLHVFLQRVIGFDSVDDESKVDRRFHRKYPKPSLWEAPQNPPYSYYLYYLYSNVASLNQWRAKRGFNTLVLRPHCGEAGDPEHLVSAYLLAHGISHGILLRKVPFVQYLYYLDQVGIAMSPLSNNALFLTYDKNPFPRYFKRGLNVSLSTDDPLQFSYTREPLIEEYSVAAQIYKLSNVDMCELARNSVLQSGWEAQIKKHWIGKDFDKSGVEGNDVVRTNVPDIRINYRYDTLSTELELVNHFANFKRTIEEK.

Residues 1 to 10 (MDNQATQRLN) show a composition bias toward polar residues. Disordered stretches follow at residues 1–61 (MDNQ…SHES) and 114–137 (AAMN…PRTL). Ser19, Ser58, and Ser61 each carry phosphoserine. A compositionally biased stretch (polar residues) spans 125-137 (HASQNSGGKPRTL). Ser138 is modified (phosphoserine). 2 residues coordinate Zn(2+): His362 and His364. Residues His364 and 433 to 438 (KFNLKY) each bind substrate. His630 provides a ligand contact to Zn(2+). Substrate is bound at residue Glu633. The Proton acceptor role is filled by His652. Asp707 is a Zn(2+) binding site. Residue 708–711 (DPLQ) coordinates substrate.

This sequence belongs to the metallo-dependent hydrolases superfamily. Adenosine and AMP deaminases family. Homotetramer. Requires Zn(2+) as cofactor.

It catalyses the reaction AMP + H2O + H(+) = IMP + NH4(+). Its pathway is purine metabolism; IMP biosynthesis via salvage pathway; IMP from AMP: step 1/1. Functionally, AMP deaminase plays a critical role in energy metabolism. The protein is AMP deaminase (AMD1) of Saccharomyces cerevisiae (strain ATCC 204508 / S288c) (Baker's yeast).